Reading from the N-terminus, the 434-residue chain is Protein POLLENLESS 3 (434 aa).

The disordered stretch occupies residues 13–47; the sequence is VYYTPPPARTSDHVAAMPMTERRRPPYSCSSSSER. Positions 34-37 match the Nuclear localization signal 1 motif; that stretch reads RRRP. TPR repeat units lie at residues 95-131, 133-164, 191-224, and 241-274; these read DSAL…ESQD, IDNL…LEQG, ARIL…ERDK, and PEAK…AVEM. Residues 142–166 adopt a coiled-coil conformation; it reads KKSGRIEEEAVLLEHKLQTLEQGMG. Residues 309 to 329 are disordered; the sequence is TANKNYSDVSSSPASVRPNSA. Residues 310–326 show a composition bias toward polar residues; that stretch reads ANKNYSDVSSSPASVRP. A Nuclear localization signal 2 motif is present at residues 377–380; it reads KRKK. A compositionally biased stretch (basic and acidic residues) spans 393-408; that stretch reads VKDTADGPKSESKKSW. The interval 393–434 is disordered; the sequence is VKDTADGPKSESKKSWADIAEEEEAEEEEEERLQGELKTAEM. The stretch at 408 to 434 forms a coiled coil; it reads WADIAEEEEAEEEEEERLQGELKTAEM. Residues 411 to 423 show a composition bias toward acidic residues; sequence IAEEEEAEEEEEE. Basic and acidic residues predominate over residues 424–434; it reads RLQGELKTAEM.

It belongs to the MS5 protein family. As to expression, expressed at low levels mostly in floral organs during meiosis. Also barely detectable in leaves, stems and roots.

The protein localises to the nucleus. Its function is as follows. Essential for male fertility, especially for microspore and pollen grain production. Involved in the regulation of cell division after male meiosis I and II to facilitate exit from meiosis and transition to G1. In Arabidopsis thaliana (Mouse-ear cress), this protein is Protein POLLENLESS 3.